A 207-amino-acid polypeptide reads, in one-letter code: Cytidylyl-2-hydroxypropylphosphonate hydrolase (207 aa).

The CDP site is built by Trp-68, Arg-74, Gln-76, and Ser-77. A divalent metal cation is bound by residues Asn-109, Asp-125, Glu-127, and Asp-129. A CDP-binding site is contributed by Lys-142. Lys-142 (proton donor) is an active-site residue. Asp-143 is a binding site for a divalent metal cation.

It belongs to the FomD family. Mn(2+) is required as a cofactor. The cofactor is Co(2+).

The catalysed reaction is cytidine 5'-({hydroxy[(S)-2-hydroxypropyl]phosphonoyl}phosphate) + H2O = (S)-2-hydroxypropylphosphonate + CMP + H(+). It functions in the pathway antibiotic biosynthesis; fosfomycin biosynthesis. Hydrolysis of (S)-HPP-CMP is inhibited by CDP. Functionally, involved in fosfomycin biosynthesis. Catalyzes the hydrolysis of cytidylyl (S)-2-hydroxypropylphosphonate ((S)-HPP-CMP) to give (S)-2-hydroxypropylphosphonate ((S)-HPP) and CMP. Can also hydrolyze (R)-HPP-CMP and cytidylyl 2-hydroxyethylphosphonate (HEP-CMP), which is a biosynthetic intermediate before C-methylation, but the catalytic efficiency is much higher with (S)-HPP-CMP. The sequence is that of Cytidylyl-2-hydroxypropylphosphonate hydrolase from Streptomyces fradiae (Streptomyces roseoflavus).